A 989-amino-acid chain; its full sequence is Putative transcription elongation factor SPT5 homolog 2 (989 aa).

Residues 1–26 show a composition bias toward acidic residues; the sequence is MSQYSDDDYSHEDDSEMEDEDEEDEY. The disordered stretch occupies residues 1 to 82; it reads MSQYSDDDYS…VEDDDDDVDV (82 aa). Basic residues predominate over residues 31 to 42; that stretch reads SRKGRSGKKRGR. The span at 65-82 shows a compositional bias: acidic residues; sequence WEVEVDDDVEDDDDDVDV. KOW domains lie at 260–287, 412–439, 464–491, 588–615, and 683–710; these read DLSRDSWVRMKLGIYKGDLAQVVDVDNV, HFMKGDAVIVIKGDLKNLKGWIEKVDEE, YFEPGNFVKVVSGIHEGGTGMIVKVDQH, VVAVKDVVRVIEGPSKGKQGPVVQIYKG, and DHLVGTYVKIRLGPFKGYSGRLVEVKDK. The segment at 790-852 is disordered; the sequence is MSPPRDNWED…SPMTPSSTSY (63 aa). The span at 842-852 shows a compositional bias: low complexity; sequence PSPMTPSSTSY. A KOW 6 domain is found at 936–963; the sequence is CPKKNERVKILGGKYCGSTAKVIGEDGQ.

It belongs to the SPT5 family.

It localises to the nucleus. May regulate transcription elongation by RNA polymerase II. May enhance transcriptional pausing at sites proximal to the promoter, which may in turn facilitate the assembly of an elongation competent RNA polymerase II complex. This chain is Putative transcription elongation factor SPT5 homolog 2, found in Arabidopsis thaliana (Mouse-ear cress).